A 238-amino-acid polypeptide reads, in one-letter code: Large ribosomal subunit protein uL1 (238 aa).

Belongs to the universal ribosomal protein uL1 family. In terms of assembly, part of the 50S ribosomal subunit.

Its function is as follows. Binds directly to 23S rRNA. The L1 stalk is quite mobile in the ribosome, and is involved in E site tRNA release. In terms of biological role, protein L1 is also a translational repressor protein, it controls the translation of the L11 operon by binding to its mRNA. The protein is Large ribosomal subunit protein uL1 of Beutenbergia cavernae (strain ATCC BAA-8 / DSM 12333 / CCUG 43141 / JCM 11478 / NBRC 16432 / NCIMB 13614 / HKI 0122).